A 113-amino-acid polypeptide reads, in one-letter code: MAAIPSSGSLVATHDYYRRRLGSTSSNSSCGSVDYSGEVIPHHPGLPKSDPGHWWASFFFGKSTHPSMTTVSESPESSGTFSISNGLIPCRLAQESLQKQKVGDPKSDSSPSA.

This sequence belongs to the PPDPF family.

In terms of biological role, probable regulator of exocrine pancreas development. This is Pancreatic progenitor cell differentiation and proliferation factor (ppdpf) from Xenopus tropicalis (Western clawed frog).